Reading from the N-terminus, the 427-residue chain is 3-phosphoshikimate 1-carboxyvinyltransferase (427 aa).

3-phosphoshikimate contacts are provided by lysine 22, serine 23, and arginine 27. Lysine 22 provides a ligand contact to phosphoenolpyruvate. The phosphoenolpyruvate site is built by glycine 96 and arginine 124. 7 residues coordinate 3-phosphoshikimate: serine 169, serine 170, glutamine 171, serine 197, aspartate 313, asparagine 336, and lysine 340. Glutamine 171 lines the phosphoenolpyruvate pocket. The Proton acceptor role is filled by aspartate 313. The phosphoenolpyruvate site is built by arginine 344, arginine 386, and lysine 411.

It belongs to the EPSP synthase family. As to quaternary structure, monomer.

The protein resides in the cytoplasm. It carries out the reaction 3-phosphoshikimate + phosphoenolpyruvate = 5-O-(1-carboxyvinyl)-3-phosphoshikimate + phosphate. It participates in metabolic intermediate biosynthesis; chorismate biosynthesis; chorismate from D-erythrose 4-phosphate and phosphoenolpyruvate: step 6/7. Functionally, catalyzes the transfer of the enolpyruvyl moiety of phosphoenolpyruvate (PEP) to the 5-hydroxyl of shikimate-3-phosphate (S3P) to produce enolpyruvyl shikimate-3-phosphate and inorganic phosphate. The sequence is that of 3-phosphoshikimate 1-carboxyvinyltransferase from Salmonella schwarzengrund (strain CVM19633).